The primary structure comprises 629 residues: MTTKSKNAINLSDSAKVDEQSVQPFTRSQKVYVQGSRPDIRVPMREITLDVTPTDFGGEINAPVTVYDTSGPYTDPNVVIDVRKGLGDVRSAWIDDRGDTERLPGLSSNFGQERLADPELTKLRFAHVNNPRRAKAGANVSQMHYARKGIITAEMEYVAIRENMKLQEARAAGLLKQQHAGHSFGASIPKEITPEFVREEIARGRAIIPANINHVELEPMIIGRNFLVKINGNIGNSALGSSIEEEVAKLTWGIRWGSDTVMDLSTGKHIHETREWIIRNSPVPIGTVPIYQALEKVNGVAEDLTWELFRDTLIEQAEQGVDYFTIHAGVLLRYVPLTAKRVTGIVSRGGSIMAKWCLAHHKENFLYTHFDEICEIMKAYDVSFSLGDGLRPGSIADANDEAQFGELETLGELTKIAWKHDVQCMIEGPGHVPMQLIKENMDKQLECCDEAPFYTLGPLTTDIAPGYDHITSGIGAAMIGWFGCAMLCYVTPKEHLGLPNKDDVKTGIITYKIAAHAADLAKGHPGAQIRDNALSKARFEFRWEDQFNLGLDPDTARSYHDETLPKDSAKVAHFCSMCGPKFCSMKITQEVREYAANQRIDAVDVDVAQGLAEQAERFKKEGSQLYKKV.

The span at 1–13 shows a compositional bias: polar residues; it reads MTTKSKNAINLSD. Positions 1-22 are disordered; it reads MTTKSKNAINLSDSAKVDEQSV. Residues Asn-233, Met-262, Tyr-291, His-327, 347-349, 388-391, and Glu-427 each bind substrate; these read SRG and DGLR. His-431 contributes to the Zn(2+) binding site. Tyr-454 lines the substrate pocket. His-495 is a binding site for Zn(2+). Residues Cys-575, Cys-578, and Cys-583 each coordinate [4Fe-4S] cluster.

Belongs to the ThiC family. As to quaternary structure, homodimer. It depends on [4Fe-4S] cluster as a cofactor.

It carries out the reaction 5-amino-1-(5-phospho-beta-D-ribosyl)imidazole + S-adenosyl-L-methionine = 4-amino-2-methyl-5-(phosphooxymethyl)pyrimidine + CO + 5'-deoxyadenosine + formate + L-methionine + 3 H(+). It functions in the pathway cofactor biosynthesis; thiamine diphosphate biosynthesis. Catalyzes the synthesis of the hydroxymethylpyrimidine phosphate (HMP-P) moiety of thiamine from aminoimidazole ribotide (AIR) in a radical S-adenosyl-L-methionine (SAM)-dependent reaction. In Pseudomonas fluorescens (strain Pf0-1), this protein is Phosphomethylpyrimidine synthase.